Consider the following 475-residue polypeptide: Protein nucleotidyltransferase YdiU (475 aa).

Positions 82, 84, 85, 105, 117, 118, 168, and 175 each coordinate ATP. Residue aspartate 240 is the Proton acceptor of the active site. 2 residues coordinate Mg(2+): asparagine 241 and aspartate 250. ATP is bound at residue aspartate 250.

Belongs to the SELO family. Mg(2+) serves as cofactor. Mn(2+) is required as a cofactor.

The catalysed reaction is L-seryl-[protein] + ATP = 3-O-(5'-adenylyl)-L-seryl-[protein] + diphosphate. It carries out the reaction L-threonyl-[protein] + ATP = 3-O-(5'-adenylyl)-L-threonyl-[protein] + diphosphate. It catalyses the reaction L-tyrosyl-[protein] + ATP = O-(5'-adenylyl)-L-tyrosyl-[protein] + diphosphate. The enzyme catalyses L-histidyl-[protein] + UTP = N(tele)-(5'-uridylyl)-L-histidyl-[protein] + diphosphate. The catalysed reaction is L-seryl-[protein] + UTP = O-(5'-uridylyl)-L-seryl-[protein] + diphosphate. It carries out the reaction L-tyrosyl-[protein] + UTP = O-(5'-uridylyl)-L-tyrosyl-[protein] + diphosphate. In terms of biological role, nucleotidyltransferase involved in the post-translational modification of proteins. It can catalyze the addition of adenosine monophosphate (AMP) or uridine monophosphate (UMP) to a protein, resulting in modifications known as AMPylation and UMPylation. The polypeptide is Protein nucleotidyltransferase YdiU (Aeromonas salmonicida (strain A449)).